The following is a 44-amino-acid chain: Opistoporin-2 (44 aa).

In terms of tissue distribution, expressed by the venom gland.

The protein resides in the secreted. The protein localises to the target cell membrane. Its function is as follows. At high concentrations, acts as a pore former in cellular membranes and causes the leakage of the cells. At submicromolar concentrations, degranulates granulocytes and has a weak hemolytic activity against human erythrocytes. Also strongly inhibits the production of superoxide anions. Has a strong antibacterial activity against Gram-negative bacteria but is less active against Gram-positive bacteria. Also has antifungal activity. This is Opistoporin-2 from Opistophthalmus carinatus (African yellow leg scorpion).